A 251-amino-acid polypeptide reads, in one-letter code: MKILLSNDDGVHALGIKVLFDELVKHFSVNVVAPDRNCSGASNSLTLLNPLRAEHLDNGFISVNGTPTDSVHLGSSQLFTDCDLVVAGINKGANLGDDTLYSGTVAAATEGRHMGMPAVAVSLAGNNEQHYQTAAIVTAKIIKRLRTHPLPADQILNINVPDIPLAELKGIKVTRLGHRHQAERMQKMQDPWQRDIYWYGVLGQELDGGEGTDFHAIANGYASVTPLTVDMTAHRSIENIKSWLTALNLSD.

Asp-8, Asp-9, Ser-39, and Asn-90 together coordinate a divalent metal cation.

It belongs to the SurE nucleotidase family. A divalent metal cation serves as cofactor.

Its subcellular location is the cytoplasm. The enzyme catalyses a ribonucleoside 5'-phosphate + H2O = a ribonucleoside + phosphate. In terms of biological role, nucleotidase that shows phosphatase activity on nucleoside 5'-monophosphates. The polypeptide is 5'-nucleotidase SurE (Colwellia psychrerythraea (strain 34H / ATCC BAA-681) (Vibrio psychroerythus)).